Reading from the N-terminus, the 1037-residue chain is Probable aminoglycoside efflux pump (1037 aa).

Topologically, residues 1–9 are cytoplasmic; that stretch reads MANFFIDRP. The helical transmembrane segment at 10–28 threads the bilayer; it reads IFAWVLAILLCLTGTLAIF. The Periplasmic segment spans residues 29 to 339; the sequence is SLPVEQYPDL…TSFVKASIED (311 aa). Residues 340-359 traverse the membrane as a helical segment; sequence VVKTLLEAIALVFLVMYLFL. The Cytoplasmic segment spans residues 360-365; it reads QNFRAT. Residues 366 to 385 traverse the membrane as a helical segment; it reads LIPTIAVPVVLMGTFSVLYA. At 386–391 the chain is on the periplasmic side; sequence FGYSVN. The chain crosses the membrane as a helical span at residues 392 to 413; it reads TLTMFAMVLAIGLLVDDAIVVV. At 414–441 the chain is on the cytoplasmic side; that stretch reads ENVERIMSEEGLTPREATRKSMGQIQGA. A helical transmembrane segment spans residues 442 to 460; that stretch reads LVGIAMVLSAVFVPMAFFG. The Periplasmic portion of the chain corresponds to 461–473; it reads GTTGAIYRQFSIT. The helical transmembrane segment at 474–496 threads the bilayer; it reads IVAAMVLSVLVAMILTPALCATL. Over 497 to 537 the chain is Cytoplasmic; the sequence is LKPLKKGEHHGQKGFFAWFNQMFNRNAERYEKGVAKILHRS. The helical transmembrane segment at 538-556 threads the bilayer; the sequence is LRWIVIYVLLLGGMVFLFL. At 557–870 the chain is on the periplasmic side; that stretch reads RLPTSFLPLE…SYQERLSGAQ (314 aa). The helical transmembrane segment at 871-890 threads the bilayer; it reads APALYAISLLVVFLCLAALY. The Cytoplasmic segment spans residues 891–896; sequence ESWSVP. A helical membrane pass occupies residues 897-916; it reads FSVMLVVPLGVIGALLATWM. Topologically, residues 917 to 922 are periplasmic; sequence RGLEND. Residues 923 to 944 traverse the membrane as a helical segment; it reads VYFQVGLLTVIGLSAKNAILIV. Topologically, residues 945–971 are cytoplasmic; it reads EFANEMNQKGHDLFEATLHACRQRLRP. A helical transmembrane segment spans residues 972 to 990; sequence ILMTSLAFIFGVLPMATST. The Periplasmic segment spans residues 991-1003; the sequence is GAGSGGQHAVGTG. A helical membrane pass occupies residues 1004-1026; that stretch reads VMGGMISATILAIYFVPLFFVLV. Topologically, residues 1027 to 1037 are cytoplasmic; that stretch reads RRRFPLKPRPE.

It belongs to the resistance-nodulation-cell division (RND) (TC 2.A.6) family.

Its subcellular location is the cell inner membrane. Participates in the efflux of aminoglycosides. Confers resistance to a variety of these substances. This is Probable aminoglycoside efflux pump (acrD) from Escherichia coli (strain K12).